The primary structure comprises 295 residues: Phosphoribosylaminoimidazole-succinocarboxamide synthase (295 aa).

It belongs to the SAICAR synthetase family.

It catalyses the reaction 5-amino-1-(5-phospho-D-ribosyl)imidazole-4-carboxylate + L-aspartate + ATP = (2S)-2-[5-amino-1-(5-phospho-beta-D-ribosyl)imidazole-4-carboxamido]succinate + ADP + phosphate + 2 H(+). It participates in purine metabolism; IMP biosynthesis via de novo pathway; 5-amino-1-(5-phospho-D-ribosyl)imidazole-4-carboxamide from 5-amino-1-(5-phospho-D-ribosyl)imidazole-4-carboxylate: step 1/2. The sequence is that of Phosphoribosylaminoimidazole-succinocarboxamide synthase from Desulforapulum autotrophicum (strain ATCC 43914 / DSM 3382 / VKM B-1955 / HRM2) (Desulfobacterium autotrophicum).